The primary structure comprises 169 residues: NADH-quinone oxidoreductase subunit B (169 aa).

Residues Cys-45, Cys-46, Cys-111, and Cys-141 each coordinate [4Fe-4S] cluster.

The protein belongs to the complex I 20 kDa subunit family. As to quaternary structure, NDH-1 is composed of 14 different subunits. Subunits NuoB, C, D, E, F, and G constitute the peripheral sector of the complex. It depends on [4Fe-4S] cluster as a cofactor.

It is found in the cell membrane. It catalyses the reaction a quinone + NADH + 5 H(+)(in) = a quinol + NAD(+) + 4 H(+)(out). Functionally, NDH-1 shuttles electrons from NADH, via FMN and iron-sulfur (Fe-S) centers, to quinones in the respiratory chain. The immediate electron acceptor for the enzyme in this species is believed to be a menaquinone. Couples the redox reaction to proton translocation (for every two electrons transferred, four hydrogen ions are translocated across the cytoplasmic membrane), and thus conserves the redox energy in a proton gradient. The protein is NADH-quinone oxidoreductase subunit B of Clostridium beijerinckii (strain ATCC 51743 / NCIMB 8052) (Clostridium acetobutylicum).